The chain runs to 425 residues: Histone-binding protein RBBP7 (425 aa).

A2 carries the post-translational modification N-acetylalanine. S3 carries the post-translational modification Phosphoserine. K4 is subject to N6-acetyllysine; alternate. K4 participates in a covalent cross-link: Glycyl lysine isopeptide (Lys-Gly) (interchain with G-Cter in SUMO2); alternate. Residue K4 forms a Glycyl lysine isopeptide (Lys-Gly) (interchain with G-Cter in ubiquitin); alternate linkage. The residue at position 10 (T10) is a Phosphothreonine. WD repeat units follow at residues 47–122, 128–173, 181–217, 228–269, 275–312, 318–369, and 376–403; these read QWLP…KINH, RARY…LRLR, GLSWNSNLSGHLLSASDDHTVCLWDINAGPKEGKIVD, VVED…HLVD, VNCLSFNPYSEFILATGSADKTVALWDLRNLKLKLHTF, EIFQ…LFIH, and ISDFSWNPNEPWVICSVSEDNIMQIWQM. S95 carries the phosphoserine modification. K101 participates in a covalent cross-link: Glycyl lysine isopeptide (Lys-Gly) (interchain with G-Cter in SUMO2). At K119 the chain carries N6-acetyllysine. Residue K155 forms a Glycyl lysine isopeptide (Lys-Gly) (interchain with G-Cter in SUMO2) linkage. Residue K159 is modified to N6-acetyllysine; alternate. A Glycyl lysine isopeptide (Lys-Gly) (interchain with G-Cter in SUMO2); alternate cross-link involves residue K159. At S354 the chain carries Phosphoserine.

The protein belongs to the WD repeat RBAP46/RBAP48/MSI1 family. As to quaternary structure, binds directly to helix 1 of the histone fold of histone H4, a region that is not accessible when H4 is in chromatin. Subunit of the type B histone acetyltransferase (HAT) complex, composed of RBBP7 and HAT1. Subunit of the core histone deacetylase (HDAC) complex, which is composed of HDAC1, HDAC2, RBBP4 and RBBP7. The core HDAC complex associates with SIN3A, ARID4B/SAP180, SAP18, SAP30, SAP130, SUDS3/SAP45 and possibly ARID4A/RBP1 and ING1 to form the SIN3 HDAC complex. Component of the nucleosome remodeling and deacetylase (NuRD) repressor complex, composed of core proteins MTA1, MTA2, MTA3, RBBP4, RBBP7, HDAC1, HDAC2, MBD2, MBD3, and peripherally associated proteins CDK2AP1, CDK2AP2, GATAD2A, GATAD2B, CHD3, CHD4 and CHD5. The exact stoichiometry of the NuRD complex is unknown, and some subunits such as MBD2 and MBD3, GATAD2A and GATAD2B, and CHD3, CHD4 and CHD5 define mutually exclusive NuRD complexes. The NuRD complex may interact with MBD3L1. The NuRD complex may interact with MBD3L2. Subunit of the PRC2/EED-EZH2 complex, which is composed of at least EED, EZH2, RBBP4, RBBP7 and SUZ12. The PRC2/EED-EZH2 complex may also associate with HDAC1. Component of the NURF-1 ISWI chromatin remodeling complex (also called the nucleosome-remodeling factor (NURF) complex) at least composed of SMARCA1, BPTF, RBBP4 and RBBP7. Within the complex interacts with SMARCA1. Component of the BPFT-SMARCA1 complex at least composed of SMARCA1, BPFT, RBBP4 and RBBP7; the complex is catalytically inactive and does not remodel chromatin. Within the complex interacts with SMARCA1. Interacts with BRCA1. Interacts with CDK2AP1. Interacts with CENPA. Interacts with CHD3. Interacts with CHD4. Interacts with CREBBP, and this interaction may be enhanced by the binding of phosphorylated CREB1 to CREBBP. Interacts with HDAC7. Interacts with MTA1. Interacts with PWWP2B. Interacts with RB1 (via viral protein-binding domain). Interacts with SUV39H1.

Its subcellular location is the nucleus. Functionally, core histone-binding subunit that may target chromatin remodeling factors, histone acetyltransferases and histone deacetylases to their histone substrates in a manner that is regulated by nucleosomal DNA. Component of several complexes which regulate chromatin metabolism. These include the type B histone acetyltransferase (HAT) complex, which is required for chromatin assembly following DNA replication; the core histone deacetylase (HDAC) complex, which promotes histone deacetylation and consequent transcriptional repression; the nucleosome remodeling and histone deacetylase complex (the NuRD complex), which promotes transcriptional repression by histone deacetylation and nucleosome remodeling; and the PRC2/EED-EZH2 complex, which promotes repression of homeotic genes during development; and the NURF (nucleosome remodeling factor) complex. This is Histone-binding protein RBBP7 (RBBP7) from Bos taurus (Bovine).